Consider the following 243-residue polypeptide: Small ribosomal subunit protein uS3 (243 aa).

Positions 39–110 constitute a KH type-2 domain; the sequence is IRTFIQKKYG…QVRINVVEVE (72 aa). Positions 216 to 243 are disordered; it reads KTIPVGASPKRKAGRRPQQFEDRSNENS. The span at 233 to 243 shows a compositional bias: basic and acidic residues; that stretch reads QQFEDRSNENS.

This sequence belongs to the universal ribosomal protein uS3 family. As to quaternary structure, part of the 30S ribosomal subunit. Forms a tight complex with proteins S10 and S14.

In terms of biological role, binds the lower part of the 30S subunit head. Binds mRNA in the 70S ribosome, positioning it for translation. The sequence is that of Small ribosomal subunit protein uS3 from Prochlorococcus marinus (strain MIT 9312).